Reading from the N-terminus, the 125-residue chain is Salivary protein 15 Ipac-1 (125 aa).

Positions 1 to 15 (MKVVCIILLFGIAAA) are cleaved as a signal peptide. N-linked (GlcNAc...) asparagine glycans are attached at residues N82 and N94. Residues 106–125 (GPSGQTCADKSKCVGHIPGC) are CD4-binding.

Belongs to the salp15 family. As to quaternary structure, interacts with host CD4. Interacts with host DC-SIGN (CD209). Interacts with Borrelia outer surface protein C (OspC). In terms of tissue distribution, expressed in salivary glands.

It is found in the secreted. Salivary tick protein that downregulates host immune system by binding to both dendritic cells, and CD4(+) T cells. Specifically binds to the CD4 coreceptor on T cells. This interaction prevents the activation of the Src kinase, Lck, and its downstream substrate Zap-70, and results in deficient activation of PLCgamma1, the repression of calcium fluxes triggered by T-cell antigen receptor (TCR) ligation, and a subsequent reduction in interleukin-2 production. This salivary protein also binds to DC-SIGN (CD209) on dendritic cells (DC) and activates the Raf-1 kinase/MEK signaling pathway that results in down-regulating expression of pro-inflammatory cytokines. Furthermore, it inhibits T cell proliferation induced by DCs. It also inhibits in vitro keratinocyte inflammation induced by Borrelia burgdorferi or by the major outer surface protein (OspC) of Borrelia. In addition, it downregulates chemokines and monocyte chemoattractant protein 1, as well as several antimicrobial peptides such as defensins, cathelicidin, psoriasin, and RNase 7. Apart from its immunomodulatory activities, it is also associated with protection of Borrelia spirochetes from antibody-mediated killing through its binding to OspC. In vivo, tests on different immune disease animal models show promising therapeutic results, e.g., in inhibiting HIV infection, experimental autoimmune encephalomyelitis, transplantation rejection, and asthma. The sequence is that of Salivary protein 15 Ipac-1 from Ixodes pacificus (Western black-legged tick).